A 259-amino-acid polypeptide reads, in one-letter code: MLAKRIIPCLDVTGGRVVKGVNFVELRDAGDPVEIAARYNEQGADELTFLDITATSDGRDLILHIIEAVASQVFIPLTVGGGVRTVEDVRRLLNAGADKTSFNSAALANPQVIEDASAKYGAQCIVVAIDAKRRSEEDARTRGAGWDVYSHGGRKNTGLDAVAWATEMARRGAGEILLTSMDRDGTKSGFDLALTRAVSDAVDVPVIASGGVGNLDHLADGIQLGGADAVLAASIFHYGEYTVQQAKQHMARRGIPVRM.

Active-site residues include aspartate 11 and aspartate 130.

Belongs to the HisA/HisF family. Heterodimer of HisH and HisF.

Its subcellular location is the cytoplasm. It carries out the reaction 5-[(5-phospho-1-deoxy-D-ribulos-1-ylimino)methylamino]-1-(5-phospho-beta-D-ribosyl)imidazole-4-carboxamide + L-glutamine = D-erythro-1-(imidazol-4-yl)glycerol 3-phosphate + 5-amino-1-(5-phospho-beta-D-ribosyl)imidazole-4-carboxamide + L-glutamate + H(+). It functions in the pathway amino-acid biosynthesis; L-histidine biosynthesis; L-histidine from 5-phospho-alpha-D-ribose 1-diphosphate: step 5/9. Functionally, IGPS catalyzes the conversion of PRFAR and glutamine to IGP, AICAR and glutamate. The HisF subunit catalyzes the cyclization activity that produces IGP and AICAR from PRFAR using the ammonia provided by the HisH subunit. The polypeptide is Imidazole glycerol phosphate synthase subunit HisF (Polaromonas sp. (strain JS666 / ATCC BAA-500)).